Here is a 173-residue protein sequence, read N- to C-terminus: Crossover junction endodeoxyribonuclease RuvC (173 aa).

Residues Asp8, Glu67, and Asp139 contribute to the active site. Residues Asp8, Glu67, and Asp139 each coordinate Mg(2+).

Belongs to the RuvC family. Homodimer which binds Holliday junction (HJ) DNA. The HJ becomes 2-fold symmetrical on binding to RuvC with unstacked arms; it has a different conformation from HJ DNA in complex with RuvA. In the full resolvosome a probable DNA-RuvA(4)-RuvB(12)-RuvC(2) complex forms which resolves the HJ. Requires Mg(2+) as cofactor.

It localises to the cytoplasm. The enzyme catalyses Endonucleolytic cleavage at a junction such as a reciprocal single-stranded crossover between two homologous DNA duplexes (Holliday junction).. Its function is as follows. The RuvA-RuvB-RuvC complex processes Holliday junction (HJ) DNA during genetic recombination and DNA repair. Endonuclease that resolves HJ intermediates. Cleaves cruciform DNA by making single-stranded nicks across the HJ at symmetrical positions within the homologous arms, yielding a 5'-phosphate and a 3'-hydroxyl group; requires a central core of homology in the junction. The consensus cleavage sequence is 5'-(A/T)TT(C/G)-3'. Cleavage occurs on the 3'-side of the TT dinucleotide at the point of strand exchange. HJ branch migration catalyzed by RuvA-RuvB allows RuvC to scan DNA until it finds its consensus sequence, where it cleaves and resolves the cruciform DNA. The sequence is that of Crossover junction endodeoxyribonuclease RuvC from Pseudoalteromonas atlantica (strain T6c / ATCC BAA-1087).